We begin with the raw amino-acid sequence, 126 residues long: Aspartate 1-decarboxylase (126 aa).

The active-site Schiff-base intermediate with substrate; via pyruvic acid is the S25. S25 bears the Pyruvic acid (Ser) mark. T57 contributes to the substrate binding site. Y58 functions as the Proton donor in the catalytic mechanism. 73-75 (GAA) is a substrate binding site.

The protein belongs to the PanD family. In terms of assembly, heterooctamer of four alpha and four beta subunits. Pyruvate is required as a cofactor. Post-translationally, is synthesized initially as an inactive proenzyme, which is activated by self-cleavage at a specific serine bond to produce a beta-subunit with a hydroxyl group at its C-terminus and an alpha-subunit with a pyruvoyl group at its N-terminus.

The protein localises to the cytoplasm. The catalysed reaction is L-aspartate + H(+) = beta-alanine + CO2. It participates in cofactor biosynthesis; (R)-pantothenate biosynthesis; beta-alanine from L-aspartate: step 1/1. Catalyzes the pyruvoyl-dependent decarboxylation of aspartate to produce beta-alanine. The chain is Aspartate 1-decarboxylase from Sodalis glossinidius (strain morsitans).